Here is a 404-residue protein sequence, read N- to C-terminus: Cysteine desulfurase IscS (404 aa).

Pyridoxal 5'-phosphate-binding positions include alanine 75–threonine 76, asparagine 155, glutamine 183, and serine 203–histidine 205. Lysine 206 is modified (N6-(pyridoxal phosphate)lysine). A pyridoxal 5'-phosphate-binding site is contributed by threonine 243. Cysteine 328 acts as the Cysteine persulfide intermediate in catalysis. Residue cysteine 328 participates in [2Fe-2S] cluster binding.

This sequence belongs to the class-V pyridoxal-phosphate-dependent aminotransferase family. NifS/IscS subfamily. Homodimer. Forms a heterotetramer with IscU, interacts with other sulfur acceptors. Pyridoxal 5'-phosphate serves as cofactor.

Its subcellular location is the cytoplasm. It catalyses the reaction (sulfur carrier)-H + L-cysteine = (sulfur carrier)-SH + L-alanine. The protein operates within cofactor biosynthesis; iron-sulfur cluster biosynthesis. In terms of biological role, master enzyme that delivers sulfur to a number of partners involved in Fe-S cluster assembly, tRNA modification or cofactor biosynthesis. Catalyzes the removal of elemental sulfur atoms from cysteine to produce alanine. Functions as a sulfur delivery protein for Fe-S cluster synthesis onto IscU, an Fe-S scaffold assembly protein, as well as other S acceptor proteins. The protein is Cysteine desulfurase IscS of Pectobacterium carotovorum subsp. carotovorum (strain PC1).